The chain runs to 368 residues: tRNA-specific 2-thiouridylase MnmA (368 aa).

Residues 11–18 (GMSGGVDS) and methionine 37 each bind ATP. The interaction with target base in tRNA stretch occupies residues 97–99 (NPD). Residue cysteine 102 is the Nucleophile of the active site. Cysteines 102 and 199 form a disulfide. Glycine 127 serves as a coordination point for ATP. The tract at residues 149 to 151 (KDQ) is interaction with tRNA. Cysteine 199 serves as the catalytic Cysteine persulfide intermediate. An interaction with tRNA region spans residues 311–312 (RY).

This sequence belongs to the MnmA/TRMU family. Interacts with TusE.

The protein resides in the cytoplasm. It carries out the reaction S-sulfanyl-L-cysteinyl-[protein] + uridine(34) in tRNA + AH2 + ATP = 2-thiouridine(34) in tRNA + L-cysteinyl-[protein] + A + AMP + diphosphate + H(+). Its function is as follows. Catalyzes the 2-thiolation of uridine at the wobble position (U34) of tRNA(Lys), tRNA(Glu) and tRNA(Gln), leading to the formation of s(2)U34, the first step of tRNA-mnm(5)s(2)U34 synthesis. Sulfur is provided by IscS, via a sulfur-relay system. Binds ATP and its substrate tRNAs. In Escherichia coli O157:H7, this protein is tRNA-specific 2-thiouridylase MnmA.